A 357-amino-acid polypeptide reads, in one-letter code: Ribonuclease 3 (357 aa).

The 150-residue stretch at 6–155 (IKFIQDQIGY…ILGAIALDSN (150 aa)) folds into the RNase III domain. Glutamate 45 serves as a coordination point for Mg(2+). Aspartate 49 is a catalytic residue. Mg(2+)-binding residues include aspartate 141 and glutamate 144. Glutamate 144 is an active-site residue. DRBM domains lie at 198-267 (PLHC…YLKD) and 285-355 (DSIG…FVLE).

The protein belongs to the ribonuclease III family. As to quaternary structure, homodimer. Requires Mg(2+) as cofactor.

It is found in the cytoplasm. It catalyses the reaction Endonucleolytic cleavage to 5'-phosphomonoester.. Functionally, digests double-stranded RNA. Involved in the processing of primary rRNA transcript to yield the immediate precursors to the large and small rRNAs (23S and 16S). Processes some mRNAs, and tRNAs when they are encoded in the rRNA operon. Processes pre-crRNA and tracrRNA of type II CRISPR loci if present in the organism. This chain is Ribonuclease 3 (rnc), found in Roseburia hominis (strain DSM 16839 / JCM 17582 / NCIMB 14029 / A2-183).